The primary structure comprises 130 residues: Holo-[acyl-carrier-protein] synthase (130 aa).

Mg(2+)-binding residues include D9 and E58.

This sequence belongs to the P-Pant transferase superfamily. AcpS family. Mg(2+) serves as cofactor.

It localises to the cytoplasm. The enzyme catalyses apo-[ACP] + CoA = holo-[ACP] + adenosine 3',5'-bisphosphate + H(+). Its function is as follows. Transfers the 4'-phosphopantetheine moiety from coenzyme A to a Ser of acyl-carrier-protein. The protein is Holo-[acyl-carrier-protein] synthase of Mycobacterium marinum (strain ATCC BAA-535 / M).